Here is a 663-residue protein sequence, read N- to C-terminus: Putative ankyrin repeat protein R219 (663 aa).

5 ANK repeats span residues 91-118 (FRIK…GYKV), 119-148 (DFDS…KLSS), 200-229 (ANQQ…KDGT), 258-288 (DWHV…KINP), and 322-351 (YFSH…GITV).

The protein is Putative ankyrin repeat protein R219 of Acanthamoeba polyphaga mimivirus (APMV).